A 27-amino-acid polypeptide reads, in one-letter code: Truncated HBeAg protein (27 aa).

This Chimpanzee hepatitis B virus (isolate United Kingdom/LSH/1988) (HBVcpz) protein is Truncated HBeAg protein (C).